The primary structure comprises 423 residues: Imidazolonepropionase (423 aa).

Residues H78 and H80 each contribute to the Fe(3+) site. 2 residues coordinate Zn(2+): H78 and H80. 4-imidazolone-5-propanoate is bound by residues R87, Y150, and H183. An N-formimidoyl-L-glutamate-binding site is contributed by Y150. H247 is a binding site for Fe(3+). H247 contributes to the Zn(2+) binding site. Residue E250 participates in 4-imidazolone-5-propanoate binding. Residue D322 participates in Fe(3+) binding. D322 provides a ligand contact to Zn(2+). The N-formimidoyl-L-glutamate site is built by N324 and G326. S327 lines the 4-imidazolone-5-propanoate pocket.

Belongs to the metallo-dependent hydrolases superfamily. HutI family. Requires Zn(2+) as cofactor. The cofactor is Fe(3+).

Its subcellular location is the cytoplasm. The catalysed reaction is 4-imidazolone-5-propanoate + H2O = N-formimidoyl-L-glutamate. It participates in amino-acid degradation; L-histidine degradation into L-glutamate; N-formimidoyl-L-glutamate from L-histidine: step 3/3. Functionally, catalyzes the hydrolytic cleavage of the carbon-nitrogen bond in imidazolone-5-propanoate to yield N-formimidoyl-L-glutamate. It is the third step in the universal histidine degradation pathway. The sequence is that of Imidazolonepropionase from Bacillus cereus (strain G9842).